Reading from the N-terminus, the 496-residue chain is Cyclin-L1 (496 aa).

Cyclin-like stretches follow at residues 68–170 (ELIQ…RILK) and 183–267 (KIIV…TTLR). The interval 301-496 (NPDGTPAILS…SHSGHGRHRR (196 aa)) is disordered. Basic and acidic residues predominate over residues 322 to 347 (SPRDVKTEEKSPNFAKVKREMDDKQS). 4 stretches are compositionally biased toward basic residues: residues 358 to 392 (ENKRSRSVSRSRSRTKSRSRSHSPRRHYNNRRRSR), 412 to 426 (RRHHNHGSPHMKLKH), 434 to 446 (RHAHKRKKSHSPS), and 456 to 468 (KKHRHEHGHHRER). The interval 363–406 (RSVSRSRSRTKSRSRSHSPRRHYNNRRRSRSGTYSSRSRSRSRS) is RS. Residues 469–478 (RERSRSFERS) show a composition bias toward basic and acidic residues. The segment covering 479-496 (HKNKHHGSSHSGHGRHRR) has biased composition (basic residues).

Belongs to the cyclin family. Cyclin L subfamily.

The protein localises to the nucleus speckle. The protein resides in the nucleus. Its subcellular location is the nucleoplasm. In terms of biological role, involved in pre-mRNA splicing. This chain is Cyclin-L1 (ccnl1), found in Xenopus laevis (African clawed frog).